The chain runs to 363 residues: Glyceraldehyde-3-phosphate dehydrogenase, muscle (363 aa).

The segment at 1–176 (MVKVGVNGFG…KYDKSLKIVS (176 aa)) is interaction with WARS. Lys-3 carries the post-translational modification N6,N6-dimethyllysine. Asn-7 carries the post-translational modification Deamidated asparagine. Residues 11 to 12 (RI) and Asp-33 each bind NAD(+). Tyr-70 is modified (phosphotyrosine). Residue Lys-89 is modified to N6-acetyllysine. Asn-92 bears the Deamidated asparagine mark. Position 94 is an N6,N6-dimethyllysine (Lys-94). Residue Asn-98 is modified to Deamidated asparagine. Position 103 is a phosphothreonine (Thr-103). NAD(+) contacts are provided by Arg-108 and Ser-150. Residues Ser-150 and Ser-176 each carry the phosphoserine modification. Asn-177 carries the deamidated asparagine modification. Phosphoserine is present on Ser-179. 179 to 181 (SCT) contacts D-glyceraldehyde 3-phosphate. Cys-180 serves as the catalytic Nucleophile. Residue Cys-180 is modified to ADP-ribosylcysteine; by autocatalysis; in irreversibly inhibited form. Cys-180 bears the Cysteine persulfide mark. Cys-180 carries the post-translational modification S-(2-succinyl)cysteine. Cys-180 carries the post-translational modification S-nitrosocysteine; in reversibly inhibited form. Thr-181 carries the post-translational modification Phosphothreonine. Deamidated asparagine is present on Asn-183. Residues Thr-205, Thr-210, and Thr-212 each carry the phosphothreonine modification. Residue Thr-210 coordinates D-glyceraldehyde 3-phosphate. Lys-214 is covalently cross-linked (Glycyl lysine isopeptide (Lys-Gly) (interchain with G-Cter in SUMO2)). The residue at position 222 (Lys-222) is an N6,N6-dimethyllysine; alternate. Residue Lys-222 is modified to N6-acetyllysine; alternate. Lys-222 is subject to N6-malonyllysine; alternate. Phosphothreonine is present on Thr-239. Residue 239 to 240 (TG) coordinates D-glyceraldehyde 3-phosphate. Lys-243 is subject to N6,N6-dimethyllysine; alternate. At Lys-243 the chain carries N6-malonyllysine; alternate. Lys-247 carries the N6-acetyllysine modification. Residue Asn-253 is modified to Deamidated asparagine. The residue at position 255 (Lys-255) is an N6,N6-dimethyllysine; alternate. N6-acetyllysine; alternate is present on Lys-255. Thr-257 carries the phosphothreonine modification. Residue Arg-262 participates in D-glyceraldehyde 3-phosphate binding. Thr-265 is subject to Phosphothreonine. Ser-269 carries the post-translational modification Phosphoserine. Cys-275 carries the post-translational modification S-(2-succinyl)cysteine. Position 275 is an S-nitrosocysteine (Cys-275). Residue Lys-282 is modified to N6-acetyllysine. The residue at position 291 (Lys-291) is an N6,N6-dimethyllysine. Ser-340 is subject to Phosphoserine. Position 344 is a deamidated asparagine (Asn-344). Asn-344 provides a ligand contact to NAD(+). A Phosphoserine modification is found at Ser-361. Lys-362 carries the N6,N6-dimethyllysine modification.

Belongs to the glyceraldehyde-3-phosphate dehydrogenase family. Homotetramer. Interacts with TPPP; the interaction is direct. Interacts (when S-nitrosylated) with SIAH1; leading to nuclear translocation. Interacts with RILPL1/GOSPEL, leading to prevent the interaction between GAPDH and SIAH1 and prevent nuclear translocation. Interacts with CHP1; the interaction increases the binding of CHP1 with microtubules. Associates with microtubules. Interacts with EIF1AD, USP25, PRKCI and WARS1. Interacts with phosphorylated RPL13A; inhibited by oxidatively-modified low-densitity lipoprotein (LDL(ox)). Component of the GAIT complex. Interacts with FKBP6; leading to inhibit GAPDH catalytic activity. Interacts with TRAF2, promoting TRAF2 ubiquitination. Interacts with TRAF3, promoting TRAF3 ubiquitination. Post-translationally, ISGylated. In terms of processing, S-nitrosylation of Cys-180 leads to interaction with SIAH1, followed by translocation to the nucleus S-nitrosylation of Cys-275 is induced by interferon-gamma and LDL(ox) implicating the iNOS-S100A8/9 transnitrosylase complex and seems to prevent interaction with phosphorylated RPL13A and to interfere with GAIT complex activity. Sulfhydration at Cys-180 increases catalytic activity.

It is found in the cytoplasm. It localises to the cytosol. Its subcellular location is the cytoskeleton. The protein localises to the nucleus. It carries out the reaction D-glyceraldehyde 3-phosphate + phosphate + NAD(+) = (2R)-3-phospho-glyceroyl phosphate + NADH + H(+). The catalysed reaction is S-nitroso-L-cysteinyl-[GAPDH] + L-cysteinyl-[protein] = L-cysteinyl-[GAPDH] + S-nitroso-L-cysteinyl-[protein]. It participates in carbohydrate degradation; glycolysis; pyruvate from D-glyceraldehyde 3-phosphate: step 1/5. With respect to regulation, glyceraldehyde-3-phosphate dehydrogenase activity is inhibited by fumarate, via the formation of S-(2-succinyl)cysteine residues. In terms of biological role, has both glyceraldehyde-3-phosphate dehydrogenase and nitrosylase activities, thereby playing a role in glycolysis and nuclear functions, respectively. Glyceraldehyde-3-phosphate dehydrogenase is a key enzyme in glycolysis that catalyzes the first step of the pathway by converting D-glyceraldehyde 3-phosphate (G3P) into 3-phospho-D-glyceroyl phosphate. Modulates the organization and assembly of the cytoskeleton. Facilitates the CHP1-dependent microtubule and membrane associations through its ability to stimulate the binding of CHP1 to microtubules. Component of the GAIT (gamma interferon-activated inhibitor of translation) complex which mediates interferon-gamma-induced transcript-selective translation inhibition in inflammation processes. Upon interferon-gamma treatment assembles into the GAIT complex which binds to stem loop-containing GAIT elements in the 3'-UTR of diverse inflammatory mRNAs (such as ceruplasmin) and suppresses their translation. Also plays a role in innate immunity by promoting TNF-induced NF-kappa-B activation and type I interferon production, via interaction with TRAF2 and TRAF3, respectively. Participates in nuclear events including transcription, RNA transport, DNA replication and apoptosis. Nuclear functions are probably due to the nitrosylase activity that mediates cysteine S-nitrosylation of nuclear target proteins such as SIRT1, HDAC2 and PRKDC. The sequence is that of Glyceraldehyde-3-phosphate dehydrogenase, muscle from Jaculus orientalis (Greater Egyptian jerboa).